The following is a 304-amino-acid chain: E3 ubiquitin-protein ligase CHIP (304 aa).

Basic and acidic residues predominate over residues Met-1–Gly-10. The tract at residues Met-1–Leu-30 is disordered. Lys-2 is covalently cross-linked (Glycyl lysine isopeptide (Lys-Gly) (interchain with G-Cter in ubiquitin)). A compositionally biased stretch (gly residues) spans Ala-11–Ser-20. Residue Ser-20 is modified to Phosphoserine. Lys-23 participates in a covalent cross-link: Glycyl lysine isopeptide (Lys-Gly) (interchain with G-Cter in ubiquitin). Residues Ser-24 and Ser-26 each carry the phosphoserine modification. TPR repeat units follow at residues Ala-27–Val-60, Ala-61–Ser-94, and Lys-96–Gln-128. The segment at Gly-102 to Ile-201 is required for interaction with MAPK7. The interval Ala-143–Gln-197 is required for interaction with and ubiquitination of MYOCD. The tract at residues Lys-144–Gln-198 is required for interaction with FOXO1. Positions Lys-144 to Tyr-304 are required for ubiquitination of FOXO1. Ser-150 is modified (phosphoserine). Glycyl lysine isopeptide (Lys-Gly) (interchain with G-Cter in ubiquitin) cross-links involve residues Lys-222 and Lys-256. A U-box domain is found at Asp-227–Val-301. Phosphoserine is present on Ser-274.

Homodimer. Interacts with BAG2, and with the E2 ubiquitin conjugating enzymes UBE2D1, UBE2D2 and UBE2D3. Detected in a ternary complex containing STUB1, HSPA1A and HSPBP1. Part of a complex composed of STUB1/CHIP, VCP/p97, CHRNA3, and UBXN2A that modulates the ubiquitination and endoplasmic reticulum-associated degradation (ERAD) of CHRNA3. Within the complex UBXN2A acts as a scaffold protein required for the interaction of CHRNA3 with VCP/p97, this interaction also inhibits CHRNA3 ubiquitination by STUB1/CHIP and subsequently ERAD. Interacts with MKKS. Interacts with DNAAF4. Interacts (via the U-box domain) with the UBE2V2-UBE2N heterodimer; the complex has a specific 'Lys-63'-linked polyubiquitination activity. Interacts (when monoubiquitinated) with ATXN3. Interacts with UBE2W. Interacts with DNAJB6. Interacts with FLCN and HSP90AA1. Interacts with HSP90. Interacts with UBE2N and UBE2V1. Interacts (via TPR repeats) with HSPA8 (via C-terminus). Interacts (via TPR repeats) with HSPA1A (via C-terminus). Interacts with the non-acetylated form of HSPA1A and HSPA1B. Interacts with SMAD3 and HSP90AB1. Interacts with UBE4B. Interacts with PRMT5. Interacts with MYOCD (via C-terminus). Interacts with FOXO1 (when phosphorylated on 'Ser-253'). Interacts with MAPK7/ERK5; the interaction is enhanced in the presence of IGF1 or MAP2K5 and promotes STUB1/CHIP E3 ligase activity. Interacts with and ubiquitinates ESR1; the interaction is promoted in the absence of estradiol (17-beta-estradiol/E2). Interacts with ESR2. Interacts with and ubiquitinates NFATC3; HSPA1A/HSP70 is required as a co-chaperone. In macrophages, interacts with PAQR3; the interaction promotes PPARG poylubiquitination and STUB1-mediated degradation. Component of the chaperone-assisted selective autophagy (CASA) complex consisting of BAG3, HSPA8/HSC70, HSPB8 and STUB1/CHIP. In terms of processing, auto-ubiquitinated; mediated by UBE2D1 and UBE2D2 and enhanced in the presence of MAP2K5. Monoubiquitinated at Lys-2 following cell stress by UBE2W, promoting the interaction with ATXN3. Expressed in the brain.

It is found in the cytoplasm. It localises to the nucleus. The protein localises to the mitochondrion. It catalyses the reaction S-ubiquitinyl-[E2 ubiquitin-conjugating enzyme]-L-cysteine + [acceptor protein]-L-lysine = [E2 ubiquitin-conjugating enzyme]-L-cysteine + N(6)-ubiquitinyl-[acceptor protein]-L-lysine.. The protein operates within protein modification; protein ubiquitination. Functionally, E3 ubiquitin-protein ligase which targets misfolded chaperone substrates towards proteasomal degradation. Plays a role in the maintenance of mitochondrial morphology and promotes mitophagic removal of dysfunctional mitochondria; thereby acts as a protector against apoptosis in response to cellular stress. Negatively regulates vascular smooth muscle contraction, via degradation of the transcriptional activator MYOCD and subsequent loss of transcription of genes involved in vascular smooth muscle contraction. Promotes survival and proliferation of cardiac smooth muscle cells via ubiquitination and degradation of FOXO1, resulting in subsequent repression of FOXO1-mediated transcription of pro-apoptotic genes. Ubiquitinates ICER-type isoforms of CREM and targets them for proteasomal degradation, thereby acts as a positive effector of MAPK/ERK-mediated inhibition of apoptosis in cardiomyocytes. Inhibits lipopolysaccharide-induced apoptosis and hypertrophy in cardiomyocytes, via ubiquitination and subsequent proteasomal degradation of NFATC3. Collaborates with ATXN3 in the degradation of misfolded chaperone substrates: ATXN3 restricting the length of ubiquitin chain attached to STUB1/CHIP substrates and preventing further chain extension. Ubiquitinates NOS1 in concert with Hsp70 and Hsp40. Modulates the activity of several chaperone complexes, including Hsp70, Hsc70 and Hsp90. Ubiquitinates CHRNA3 targeting it for endoplasmic reticulum-associated degradation in cortical neurons, as part of the STUB1-VCP-UBXN2A complex. Ubiquitinates and promotes ESR1 proteasomal degradation in response to age-related circulating estradiol (17-beta-estradiol/E2) decline, thereby promotes neuronal apoptosis in response to ischemic reperfusion injury. Mediates transfer of non-canonical short ubiquitin chains to HSPA8 that have no effect on HSPA8 degradation. Mediates polyubiquitination of DNA polymerase beta (POLB) at 'Lys-41', 'Lys-61' and 'Lys-81', thereby playing a role in base-excision repair: catalyzes polyubiquitination by amplifying the HUWE1/ARF-BP1-dependent monoubiquitination and leading to POLB-degradation by the proteasome. Mediates polyubiquitination of CYP3A4. Ubiquitinates EPHA2 and may regulate the receptor stability and activity through proteasomal degradation. Acts as a co-chaperone for HSPA1A and HSPA1B chaperone proteins and promotes ubiquitin-mediated protein degradation. Negatively regulates the suppressive function of regulatory T-cells (Treg) during inflammation by mediating the ubiquitination and degradation of FOXP3 in a HSPA1A/B-dependent manner. Catalyzes monoubiquitination of SIRT6, preventing its degradation by the proteasome. Likely mediates polyubiquitination and down-regulates plasma membrane expression of PD-L1/CD274, an immune inhibitory ligand critical for immune tolerance to self and antitumor immunity. Negatively regulates TGF-beta signaling by modulating the basal level of SMAD3 via ubiquitin-mediated degradation. Plays a role in the degradation of TP53. Mediates ubiquitination of RIPK3 leading to its subsequent proteasome-dependent degradation. May regulate myosin assembly in striated muscles together with UBE4B and VCP/p97 by targeting myosin chaperone UNC45B for proteasomal degradation. Ubiquitinates PPARG in macrophages playing a role in M2 macrophages polarization and angiogenesis. In Mus musculus (Mouse), this protein is E3 ubiquitin-protein ligase CHIP.